The following is a 249-amino-acid chain: Pulmonary surfactant-associated protein A (249 aa).

The N-terminal stretch at 1–20 is a signal peptide; it reads MLRWPLALTFLLLAVSGLEC. A Collagen-like domain is found at 28 to 100; the sequence is ASPGIPGTPG…PGERGPPGLP (73 aa). Positions 29-102 are disordered; the sequence is SPGIPGTPGS…ERGPPGLPAH (74 aa). Pro30, Pro33, Pro36, Pro42, Pro54, Pro57, Pro63, and Pro70 each carry 4-hydroxyproline. Residues 42–51 show a composition bias toward basic and acidic residues; sequence PGRDGRDGIK. Over residues 84 to 93 the composition is skewed to basic and acidic residues; that stretch reads ERGEKGEPGE. Residues 133-249 enclose the C-type lectin domain; the sequence is AVGEKVFSTN…QQYRLAICEF (117 aa). Cystine bridges form between Cys155–Cys247 and Cys225–Cys239. An N-linked (GlcNAc...) asparagine glycan is attached at Asn208. Residues Glu216, Arg218, Asn235, and Asp236 each coordinate Ca(2+).

This sequence belongs to the SFTPA family. As to quaternary structure, oligomeric complex of 6 set of homotrimers.

It is found in the secreted. It localises to the extracellular space. The protein localises to the extracellular matrix. The protein resides in the surface film. Functionally, in presence of calcium ions, it binds to surfactant phospholipids and contributes to lower the surface tension at the air-liquid interface in the alveoli of the mammalian lung and is essential for normal respiration. Enhances the expression of MYO18A/SP-R210 on alveolar macrophages. The polypeptide is Pulmonary surfactant-associated protein A (SFTPA1) (Sus scrofa (Pig)).